The chain runs to 45 residues: uncharacterized protein (45 aa).

The first 19 residues, 1–19 (MTFQILFLFVFHFVYIFRA), serve as a signal peptide directing secretion.

This is an uncharacterized protein from Saccharomyces cerevisiae (strain ATCC 204508 / S288c) (Baker's yeast).